Reading from the N-terminus, the 60-residue chain is Large ribosomal subunit protein bL33 (60 aa).

This sequence belongs to the bacterial ribosomal protein bL33 family.

This chain is Large ribosomal subunit protein bL33, found in Christiangramia forsetii (strain DSM 17595 / CGMCC 1.15422 / KT0803) (Gramella forsetii).